The chain runs to 385 residues: tRNA-specific 2-thiouridylase MnmA (385 aa).

ATP is bound by residues 8–15 (AMSGGVDS) and Leu-34. The active-site Nucleophile is Cys-102. An intrachain disulfide couples Cys-102 to Cys-200. Gly-126 contacts ATP. Residues 150 to 152 (KDQ) are interaction with tRNA. Cys-200 functions as the Cysteine persulfide intermediate in the catalytic mechanism. Residues 307–308 (RY) are interaction with tRNA.

This sequence belongs to the MnmA/TRMU family.

It is found in the cytoplasm. The catalysed reaction is S-sulfanyl-L-cysteinyl-[protein] + uridine(34) in tRNA + AH2 + ATP = 2-thiouridine(34) in tRNA + L-cysteinyl-[protein] + A + AMP + diphosphate + H(+). In terms of biological role, catalyzes the 2-thiolation of uridine at the wobble position (U34) of tRNA, leading to the formation of s(2)U34. This Heliobacterium modesticaldum (strain ATCC 51547 / Ice1) protein is tRNA-specific 2-thiouridylase MnmA.